The primary structure comprises 2944 residues: Collagen alpha-1(VII) chain (2944 aa).

The N-terminal stretch at 1-24 is a signal peptide; the sequence is MRLRLLVAALCAAEILMGAPEVWA. The interval 18–1254 is nonhelical region (NC1); the sequence is GAPEVWAQPR…TGPCAVHCPK (1237 aa). The region spanning 39–212 is the VWFA 1 domain; it reads DIVFLLDGSS…SILRTLLPLI (174 aa). 9 consecutive Fibronectin type-III domains span residues 235–330, 331–417, 418–508, 511–598, 601–688, 689–776, 779–867, 870–957, and 959–1053; these read GPRD…TAKE, GLEL…TASS, VEQT…LEQL, PVMN…DPEA, VVPG…DPLG, PVRR…APEP, SVSK…PPAT, LLET…EPSH, and PSTE…SHGP. Asparagine 338 carries N-linked (GlcNAc...) asparagine glycosylation. A glycan (N-linked (GlcNAc...) asparagine) is linked at asparagine 787. The VWFA 2 domain maps to 1055–1230; it reads DVVFLLHATR…PGLDRAVSDL (176 aa). N-linked (GlcNAc...) asparagine glycosylation occurs at asparagine 1110. Residues 1171-1173 carry the Cell attachment site motif; that stretch reads RGD. The tract at residues 1255 to 1475 is interrupted collagenous region; the sequence is GQKGEPGVTG…GLRGAPGMTG (221 aa). The tract at residues 1255–2775 is triple-helical region; the sequence is GQKGEPGVTG…GPRGEKGEAA (1521 aa). 2 disordered regions span residues 1259 to 1934 and 1960 to 2773; these read EPGV…GSLP and SSGS…EKGE. The span at 1338–1352 shows a compositional bias: low complexity; sequence RGPQGPKGEPGEPGQ. Positions 1353-1363 are enriched in gly residues; that stretch reads ITGGGGPGFPG. Composition is skewed to basic and acidic residues over residues 1397 to 1406 and 1439 to 1448; these read KGDKGDRGER and PGEKGEKGDC. A compositionally biased stretch (low complexity) spans 1507–1518; the sequence is PGAAGHPGVEGP. Basic and acidic residues-rich tracts occupy residues 1527–1536, 1627–1639, and 1666–1680; these read RRGEKGEPGR, RGRD…KGDE, and VGEK…EDGR. The segment covering 1813–1822 has biased composition (pro residues); that stretch reads PPGPPGPPGV. 3 stretches are compositionally biased toward basic and acidic residues: residues 1846-1855, 1862-1871, and 1968-1984; these read EDGRKGEKGD, EGPDGPKGER, and PERR…RGPP. Positions 2002-2004 match the Cell attachment site motif; the sequence is RGD. A compositionally biased stretch (gly residues) spans 2040–2049; sequence GRAGGSGEAG. Basic and acidic residues predominate over residues 2050-2068; it reads RPGERGERGEKGERGDQGR. The Cell attachment site motif lies at 2063–2065; it reads RGD. Over residues 2074–2083 the composition is skewed to pro residues; sequence LPGPPGPPGP. The span at 2130 to 2140 shows a compositional bias: basic and acidic residues; that stretch reads DVGEPGKRGHD. A 4-hydroxyproline mark is found at proline 2158, proline 2167, proline 2176, and proline 2179. Low complexity-rich tracts occupy residues 2182–2197, 2226–2241, 2279–2299, and 2306–2317; these read PGLA…SGLK, SGLV…PGQV, PKGE…PPGA, and PGDLAGALLGEP. Positions 2319 to 2335 are enriched in basic and acidic residues; sequence AKGDRGLPGPRGEKGEA. A compositionally biased stretch (low complexity) spans 2414 to 2427; that stretch reads ERGLAGPPGREGAP. Basic and acidic residues-rich tracts occupy residues 2462–2477 and 2525–2544; these read RGER…DGHP and AKGD…KGPR. A compositionally biased stretch (low complexity) spans 2576-2594; sequence PKGEPGAAGIPGEPGAPGK. A Cell attachment site motif is present at residues 2601 to 2603; it reads RGD. Residues 2615-2636 are compositionally biased toward basic and acidic residues; sequence LKGEKGIKGTCGRDGERGDKGE. Lysine 2616 and lysine 2622 each carry 5-hydroxylysine. Positions 2631–2633 match the Cell attachment site motif; the sequence is RGD. 4-hydroxyproline occurs at positions 2655, 2658, and 2664. Over residues 2695 to 2704 the composition is skewed to gly residues; sequence GPPGVGGFPG. Residues 2776–2944 form a nonhelical region (NC2) region; sequence LTEDDIRDFV…GVHSQKTGAA (169 aa). The BPTI/Kunitz inhibitor domain occupies 2879 to 2931; it reads CSLPLDEGSCTAYTLRWYHRAVPGGTACHPFVYGGCGGNANRFGTREACERRC. Cystine bridges form between cysteine 2879–cysteine 2931, cysteine 2888–cysteine 2914, and cysteine 2906–cysteine 2927.

As to quaternary structure, homotrimer. Interacts with MIA3/TANGO1; facilitating its loading into transport carriers and subsequent secretion. Post-translationally, prolines at the third position of the tripeptide repeating unit (G-X-Y) are hydroxylated in some or all of the chains.

The protein localises to the secreted. It is found in the extracellular space. Its subcellular location is the extracellular matrix. The protein resides in the basement membrane. Stratified squamous epithelial basement membrane protein that forms anchoring fibrils which may contribute to epithelial basement membrane organization and adherence by interacting with extracellular matrix (ECM) proteins such as type IV collagen. The chain is Collagen alpha-1(VII) chain from Mus musculus (Mouse).